We begin with the raw amino-acid sequence, 345 residues long: Golgi-associated RAB2 interactor protein 1B (345 aa).

2 disordered regions span residues 222–241 and 271–299; these read CSPS…SQPS and SRSS…PCTR. Over residues 275 to 285 the composition is skewed to basic and acidic residues; the sequence is KKTENKKDSSG.

Belongs to the GARIN family.

The protein localises to the golgi apparatus. Functionally, RAB2B effector protein required for accurate acrosome formation and normal male fertility. In complex with RAB2A/RAB2B, seems to suppress excessive vesicle trafficking during acrosome formation. This Bos taurus (Bovine) protein is Golgi-associated RAB2 interactor protein 1B (GARIN1B).